The primary structure comprises 176 residues: Transcriptional repressor NrdR (176 aa).

The segment at 3 to 34 (CPFCQHTDSRVLESRSAEAGQSVRRRRECLQC) is a zinc-finger region. In terms of domain architecture, ATP-cone spans 49–139 (ITVIKRNQDR…VYRQFRGIRD (91 aa)). The interval 151 to 176 (GDGPLPSVLDEPYEDTAQPTIMISPQ) is disordered. A compositionally biased stretch (polar residues) spans 167–176 (AQPTIMISPQ).

This sequence belongs to the NrdR family. Zn(2+) serves as cofactor.

Functionally, negatively regulates transcription of bacterial ribonucleotide reductase nrd genes and operons by binding to NrdR-boxes. In Acaryochloris marina (strain MBIC 11017), this protein is Transcriptional repressor NrdR.